A 647-amino-acid polypeptide reads, in one-letter code: Transcriptional repressor XBP1 (647 aa).

2 stretches are compositionally biased toward polar residues: residues 138–148 and 156–170; these read SNKTPVSASPT and STAS…LTKN. 2 disordered regions span residues 138–170 and 264–295; these read SNKT…LTKN and LLSS…STSS. The segment covering 264–282 has biased composition (low complexity); sequence LLSSSTSSPPKRRTSTGST. One can recognise an HTH APSES-type domain in the interval 282-395; the sequence is TFLDANASSS…PDFPKDCESW (114 aa). A DNA-binding region (H-T-H motif) is located at residues 318 to 339; it reads CQSYKDFLINELGPDQIDLPNL. Positions 425–434 are enriched in low complexity; the sequence is TNFTSTAVAR. 3 disordered regions span residues 425-455, 485-508, and 612-647; these read TNFT…HSKA, KKNS…GPRD, and QNQR…NSKQ. Residues 435 to 445 are compositionally biased toward basic residues; the sequence is PRQKPRPRPRQ. Low complexity predominate over residues 493–502; the sequence is SSTYTSQTSS.

The protein resides in the nucleus. Transcriptional repressor which binds to the consensus sequence 5'-GCCTCGA[G/A]G[C/A]-3'. Represses CLN1 transcription. The protein is Transcriptional repressor XBP1 (XBP1) of Saccharomyces cerevisiae (strain ATCC 204508 / S288c) (Baker's yeast).